The following is a 229-amino-acid chain: PKHD-type hydroxylase BBta_1313 (229 aa).

The Fe2OG dioxygenase domain maps to 78-180; sequence HIFPPLFNRY…RIASFFWLQS (103 aa). 3 residues coordinate Fe cation: His-98, Asp-100, and His-161. Arg-171 is a 2-oxoglutarate binding site.

The cofactor is Fe(2+). Requires L-ascorbate as cofactor.

The protein is PKHD-type hydroxylase BBta_1313 of Bradyrhizobium sp. (strain BTAi1 / ATCC BAA-1182).